Here is a 273-residue protein sequence, read N- to C-terminus: Ribosomal RNA small subunit methyltransferase A (273 aa).

The S-adenosyl-L-methionine site is built by asparagine 18, leucine 20, glycine 45, glutamate 66, aspartate 91, and asparagine 113.

This sequence belongs to the class I-like SAM-binding methyltransferase superfamily. rRNA adenine N(6)-methyltransferase family. RsmA subfamily.

The protein localises to the cytoplasm. It carries out the reaction adenosine(1518)/adenosine(1519) in 16S rRNA + 4 S-adenosyl-L-methionine = N(6)-dimethyladenosine(1518)/N(6)-dimethyladenosine(1519) in 16S rRNA + 4 S-adenosyl-L-homocysteine + 4 H(+). Its function is as follows. Specifically dimethylates two adjacent adenosines (A1518 and A1519) in the loop of a conserved hairpin near the 3'-end of 16S rRNA in the 30S particle. May play a critical role in biogenesis of 30S subunits. This chain is Ribosomal RNA small subunit methyltransferase A, found in Salmonella typhimurium (strain LT2 / SGSC1412 / ATCC 700720).